A 149-amino-acid chain; its full sequence is Small ribosomal subunit protein uS15 (149 aa).

Over residues 1–11 (MARMHSRDRGK) the composition is skewed to basic and acidic residues. Positions 1–25 (MARMHSRDRGKSGSTRPPRVAPPSW) are disordered.

It belongs to the universal ribosomal protein uS15 family. Part of the 30S ribosomal subunit.

In Methanopyrus kandleri (strain AV19 / DSM 6324 / JCM 9639 / NBRC 100938), this protein is Small ribosomal subunit protein uS15.